A 1790-amino-acid chain; its full sequence is Non-reducing polyketide synthase gsfA (1790 aa).

Residues 20–263 are N-terminal acylcarrier protein transacylase domain (SAT); the sequence is GDQRTLFRKL…AMRKIQGMWH (244 aa). One can recognise a Ketosynthase family 3 (KS3) domain in the interval 392–822; the sequence is SSKIAVVGMS…GGNTAMIIEE (431 aa). Active-site for beta-ketoacyl synthase activity residues include cysteine 563, histidine 698, and histidine 741. Positions 922 to 1223 are malonyl-CoA:ACP transacylase (MAT) domain; it reads FAFAGQGTFY…CSTLHRDSDN (302 aa). Positions 1298 to 1615 are product template (PT) domain; it reads TSSIHRLYSE…PRIMLNRFFQ (318 aa). The segment at 1302-1435 is N-terminal hotdog fold; the sequence is HRLYSENYDS…AYYEDPSTWL (134 aa). Residues 1302–1611 enclose the PKS/mFAS DH domain; it reads HRLYSENYDS…FRQWPRIMLN (310 aa). The active-site Proton acceptor; for dehydratase activity is histidine 1334. Positions 1460–1611 are C-terminal hotdog fold; the sequence is MANKLTTSLA…FRQWPRIMLN (152 aa). Catalysis depends on aspartate 1518, which acts as the Proton donor; for dehydratase activity. Disordered stretches follow at residues 1621-1648 and 1686-1718; these read PPAP…EKTT and LDYS…ADGA. Positions 1699–1708 are enriched in basic and acidic residues; that stretch reads SDERIEKTDS. One can recognise a Carrier domain in the interval 1716 to 1790; the sequence is DGANDVTSRA…TIGDLKKLLS (75 aa). O-(pantetheine 4'-phosphoryl)serine is present on serine 1753.

The catalysed reaction is 6 malonyl-CoA + acetyl-CoA + 4 H(+) = 2-(2,4-dihydroxy-6-oxidobenzoyl)-5-hydroxy-3-methylbenzenolate + 6 CO2 + 7 CoA + H2O. It functions in the pathway secondary metabolite biosynthesis; terpenoid biosynthesis. Functionally, norlichexanthone synthase; part of the gene cluster that mediates the biosynthesis of griseofulvin, an important antifungal drug that has been in use for a long time for treating dermatophyte infections. The first step of the pathway is the formation of the heptaketide backbone by gsfA which is initiated by priming with acetyl-CoA, followed by sequential condensations of 6 malonyl-CoA units. The resulting benzophenone can undergo a spontaneous dehydration to form norlichexanthone. However, the true precursor for the griseofulvin biosynthesis is not norlichexanthone, but the heptaketide benzophenone that is O-methylated at 3-OH by gsfB to produce griseophenone D which is further methylated at 9-OH by gsfC to yield griseophenone C. Griseophenone C is then substrate of halogenase gsfI which is responsible for the regio-specific chlorination at the C13 position to form griseophenone B. The cytochrome P450 gsfF catalyzes the coupling of orcinol and phloroglucinol rings in griseophenone B to form desmethyl-dehydrogriseofulvin A which is further methylated at 5-OH by gsfD to yield dehydrogriseofulvin. Finally, gsfE performs stereospecific reduction of enone 18 of dehydrogriseofulvin to afford the final product griseofulvin. This chain is Non-reducing polyketide synthase gsfA, found in Penicillium aethiopicum.